Here is a 267-residue protein sequence, read N- to C-terminus: RWD domain-containing protein 3 (267 aa).

The RWD domain occupies 7-114; sequence EELSVLAAIF…LWIQQNLRHI (108 aa). 2 interaction with UBE2I/UBC9 regions span residues 13–15 and 100–102; these read AAI and VHE.

As to quaternary structure, isoform 1 and isoform 2 interact with UBE2I/UBC9. Isoform 1 shows a greater interaction with NFKBIA and HIF1A as compared to isoform 2. Isoform 2 interacts with NCOA2 and NR3C1. In terms of tissue distribution, isoform 1 and isoform 2 are expressed in glioma tumors (at protein level). Expressed in a wide number of tissues with highest expression in cerebellum, pituitary, heart, kidney, liver, stomach, pancreas, prostate and spleen. Low levels in thalamus, spinal cord, esophagus, thymus, lung and peripheral blood leukocytes. A higher level expression seen in pituitary tumors as compared to the pituitary gland.

Its subcellular location is the nucleus. The protein resides in the cytoplasm. Its function is as follows. Enhancer of SUMO conjugation. Via its interaction with UBE2I/UBC9, increases SUMO conjugation to proteins by promoting the binding of E1 and E2 enzymes, thioester linkage between SUMO and UBE2I/UBC9 and transfer of SUMO to specific target proteins which include HIF1A, PIAS, NFKBIA, NR3C1 and TOP1. Isoform 1 and isoform 2 positively regulate the NF-kappa-B signaling pathway by enhancing the sumoylation of NF-kappa-B inhibitor alpha (NFKBIA), promoting its stabilization which consequently leads to an increased inhibition of NF-kappa-B transcriptional activity. Isoform 1 and isoform 2 negatively regulate the hypoxia-inducible factor-1 alpha (HIF1A) signaling pathway by increasing the sumoylation of HIF1A, promoting its stabilization, transcriptional activity and the expression of its target gene VEGFA during hypoxia. Isoform 2 promotes the sumoylation and transcriptional activity of the glucocorticoid receptor NR3C1 and enhances the interaction of SUMO1 and NR3C1 with UBE2I/UBC9. Has no effect on ubiquitination. This is RWD domain-containing protein 3 (RWDD3) from Homo sapiens (Human).